Reading from the N-terminus, the 331-residue chain is Probable 5-dehydro-4-deoxyglucarate dehydratase 2 (331 aa).

Residues M1–T23 form a disordered region. The span at D10–T23 shows a compositional bias: low complexity.

The protein belongs to the DapA family.

The catalysed reaction is 5-dehydro-4-deoxy-D-glucarate + H(+) = 2,5-dioxopentanoate + CO2 + H2O. The protein operates within carbohydrate acid metabolism; D-glucarate degradation; 2,5-dioxopentanoate from D-glucarate: step 2/2. The protein is Probable 5-dehydro-4-deoxyglucarate dehydratase 2 of Streptomyces avermitilis (strain ATCC 31267 / DSM 46492 / JCM 5070 / NBRC 14893 / NCIMB 12804 / NRRL 8165 / MA-4680).